The sequence spans 5263 residues: Fibroin heavy chain (5263 aa).

A signal peptide spans 1–21 (MRVKTFVILCCALQYVAYTNA). The segment at 149 to 5206 (AAVGAGAGAG…GSGAGAGGSV (5058 aa)) is highly repetitive. Cys5260 and Cys5263 are joined by a disulfide.

As to quaternary structure, silk fibroin elementary unit consists in a disulfide-linked heavy and light chain and a p25 glycoprotein in molar ratios of 6:6:1. This results in a complex of approximately 2.3 MDa. In terms of processing, the interchain disulfide bridge is essential for the intracellular transport and secretion of fibroin. Produced exclusively in the posterior (PSG) section of silk glands, which are essentially modified salivary glands.

Functionally, core component of the silk filament; a strong, insoluble and chemically inert fiber. This chain is Fibroin heavy chain (FIBH), found in Bombyx mori (Silk moth).